The primary structure comprises 309 residues: Putative pyridoxal kinase C6F6.11c (309 aa).

Substrate is bound by residues Ser12 and Tyr123. ATP is bound by residues 182–183 (SS) and 209–221 (LIPVIPGIFRGTG). Asp222 contributes to the substrate binding site.

This sequence belongs to the pyridoxine kinase family. Requires a divalent metal cation as cofactor.

The protein localises to the cytoplasm. Its subcellular location is the nucleus. It carries out the reaction pyridoxal + ATP = pyridoxal 5'-phosphate + ADP + H(+). Its function is as follows. Required for synthesis of pyridoxal-5-phosphate from vitamin B6. In Schizosaccharomyces pombe (strain 972 / ATCC 24843) (Fission yeast), this protein is Putative pyridoxal kinase C6F6.11c.